A 302-amino-acid polypeptide reads, in one-letter code: N-acetylmuramic acid 6-phosphate etherase (302 aa).

An SIS domain is found at 58–221 (IGEAFLNGGR…STGAMVKTGK (164 aa)). Residue E86 is the Proton donor of the active site. The active site involves E117.

It belongs to the GCKR-like family. MurNAc-6-P etherase subfamily. In terms of assembly, homodimer.

The enzyme catalyses N-acetyl-D-muramate 6-phosphate + H2O = N-acetyl-D-glucosamine 6-phosphate + (R)-lactate. It participates in amino-sugar metabolism; N-acetylmuramate degradation. Its function is as follows. Specifically catalyzes the cleavage of the D-lactyl ether substituent of MurNAc 6-phosphate, producing GlcNAc 6-phosphate and D-lactate. This Clostridium botulinum (strain Hall / ATCC 3502 / NCTC 13319 / Type A) protein is N-acetylmuramic acid 6-phosphate etherase.